Here is a 437-residue protein sequence, read N- to C-terminus: Acyl-coenzyme A thioesterase 2, chloroplastic (437 aa).

The N-terminal 13 residues, 1–13 (MDLSSSPNHPITV), are a transit peptide targeting the chloroplast. 2 consecutive HotDog ACOT-type domains span residues 89-211 (ILYN…RDSK) and 287-404 (RDTR…RPEA).

Belongs to the acyl coenzyme A hydrolase family. As to expression, mostly expressed at low levels in glandular trichomes (lupulin glands), and, to a lower extent, in stems, leaves, flowers and cones.

It is found in the plastid. Its subcellular location is the chloroplast. Functionally, acyl-CoA thioesterases are a group of enzymes that catalyze the hydrolysis of acyl-CoAs to the free fatty acid and coenzyme A (CoASH), providing the potential to regulate intracellular levels of acyl-CoAs, free fatty acids and CoASH. This Humulus lupulus (European hop) protein is Acyl-coenzyme A thioesterase 2, chloroplastic.